The chain runs to 415 residues: Methylthioribose-1-phosphate isomerase (415 aa).

The active-site Proton donor is the D284.

It belongs to the eIF-2B alpha/beta/delta subunits family. MtnA subfamily.

Its subcellular location is the cytoplasm. It localises to the nucleus. The enzyme catalyses 5-(methylsulfanyl)-alpha-D-ribose 1-phosphate = 5-(methylsulfanyl)-D-ribulose 1-phosphate. Its pathway is amino-acid biosynthesis; L-methionine biosynthesis via salvage pathway; L-methionine from S-methyl-5-thio-alpha-D-ribose 1-phosphate: step 1/6. Catalyzes the interconversion of methylthioribose-1-phosphate (MTR-1-P) into methylthioribulose-1-phosphate (MTRu-1-P). This Vanderwaltozyma polyspora (strain ATCC 22028 / DSM 70294 / BCRC 21397 / CBS 2163 / NBRC 10782 / NRRL Y-8283 / UCD 57-17) (Kluyveromyces polysporus) protein is Methylthioribose-1-phosphate isomerase.